A 456-amino-acid polypeptide reads, in one-letter code: Glutathione reductase (456 aa).

FAD is bound by residues serine 14, glycine 15, glutamate 34, threonine 41, cysteine 42, and lysine 50. Serine 14 lines the glutathione pocket. Cysteine 42 and cysteine 47 form a disulfide bridge. Tyrosine 99 lines the glutathione pocket. Glycine 115 contacts FAD. NADP(+)-binding residues include alanine 180, isoleucine 183, glutamate 186, arginine 203, arginine 209, and glycine 267. Aspartate 308 lines the FAD pocket. Position 315 (glutamate 315) interacts with NADP(+). Position 317 (threonine 317) interacts with FAD. Position 325 (arginine 325) interacts with glutathione. Position 348 (valine 348) interacts with NADP(+). Histidine 445 contributes to the FAD binding site. Histidine 445 functions as the Proton acceptor in the catalytic mechanism.

It belongs to the class-I pyridine nucleotide-disulfide oxidoreductase family. In terms of assembly, homodimer. FAD is required as a cofactor.

It localises to the cytoplasm. It carries out the reaction 2 glutathione + NADP(+) = glutathione disulfide + NADPH + H(+). Its function is as follows. Catalyzes the reduction of glutathione disulfide (GSSG) to reduced glutathione (GSH). Constitutes the major mechanism to maintain a high GSH:GSSG ratio in the cytosol. The polypeptide is Glutathione reductase (gor) (Haemophilus influenzae (strain ATCC 51907 / DSM 11121 / KW20 / Rd)).